We begin with the raw amino-acid sequence, 160 residues long: Protein D14 (160 aa).

The chain is Protein D14 (D14) from Escherichia phage T5 (Enterobacteria phage T5).